Here is a 516-residue protein sequence, read N- to C-terminus: GMP synthase [glutamine-hydrolyzing] (516 aa).

One can recognise a Glutamine amidotransferase type-1 domain in the interval lysine 10 to asparagine 201. The active-site Nucleophile is cysteine 87. Catalysis depends on residues histidine 175 and glutamate 177. The GMPS ATP-PPase domain occupies tryptophan 202–arginine 391. Position 229–235 (serine 229–serine 235) interacts with ATP.

Homodimer.

The catalysed reaction is XMP + L-glutamine + ATP + H2O = GMP + L-glutamate + AMP + diphosphate + 2 H(+). Its pathway is purine metabolism; GMP biosynthesis; GMP from XMP (L-Gln route): step 1/1. Functionally, catalyzes the synthesis of GMP from XMP. The polypeptide is GMP synthase [glutamine-hydrolyzing] (Lactobacillus acidophilus (strain ATCC 700396 / NCK56 / N2 / NCFM)).